The primary structure comprises 160 residues: Endoribonuclease YbeY (160 aa).

His124, His128, and His134 together coordinate Zn(2+).

It belongs to the endoribonuclease YbeY family. Requires Zn(2+) as cofactor.

It localises to the cytoplasm. In terms of biological role, single strand-specific metallo-endoribonuclease involved in late-stage 70S ribosome quality control and in maturation of the 3' terminus of the 16S rRNA. This chain is Endoribonuclease YbeY, found in Jannaschia sp. (strain CCS1).